The chain runs to 446 residues: Coagulation factor VII (446 aa).

Positions 1–24 (MVPQAHGLLLLCFLLQLQGPLGTA) are cleaved as a signal peptide. A propeptide spanning residues 25–41 (VFITQEEAHGVLHRQRR) is cleaved from the precursor. Positions 42–86 (ANSLLEELWPGSLERECNEEQCSFEEAREIFKSPERTKQFWIVYS) constitute a Gla domain. 10 positions are modified to 4-carboxyglutamate: glutamate 47, glutamate 48, glutamate 55, glutamate 57, glutamate 60, glutamate 61, glutamate 66, glutamate 67, glutamate 70, and glutamate 76. Cysteine 58 and cysteine 63 are joined by a disulfide. The region spanning 87–123 (DGDQCASNPCQNGGTCQDHLKSYVCFCLLDFEGRNCE) is the EGF-like 1; calcium-binding domain. Disulfide bonds link cysteine 91–cysteine 102, cysteine 96–cysteine 111, cysteine 113–cysteine 122, cysteine 132–cysteine 143, cysteine 139–cysteine 153, cysteine 155–cysteine 168, cysteine 176–cysteine 303, cysteine 200–cysteine 205, cysteine 219–cysteine 235, and cysteine 351–cysteine 370. An O-linked (Glc...) serine; alternate glycan is attached at serine 93. O-linked (Xyl...) serine; alternate glycosylation occurs at serine 93. Position 104 is a (3R)-3-hydroxyaspartate (aspartate 104). One can recognise an EGF-like 2 domain in the interval 128-169 (EQLICANENGDCDQYCRDHVGTKRTCSCHEDYTLQPDEVSCK). A glycan (N-linked (GlcNAc...) asparagine) is linked at asparagine 186. The Peptidase S1 domain occupies 194–433 (IVGGNVCPKG…YIDWLVRHMD (240 aa)). The active-site Charge relay system is the histidine 234. Asparagine 244 carries N-linked (GlcNAc...) asparagine glycosylation. Aspartate 283 functions as the Charge relay system in the catalytic mechanism. Aspartate 379 is a binding site for substrate. Cysteine 381 and cysteine 409 are oxidised to a cystine. Residue serine 385 is the Charge relay system of the active site.

Belongs to the peptidase S1 family. Heterodimer of a light chain and a heavy chain linked by a disulfide bond. Post-translationally, the vitamin K-dependent, enzymatic carboxylation of some glutamate residues allows the modified protein to bind calcium. The iron and 2-oxoglutarate dependent 3-hydroxylation of aspartate and asparagine is (R) stereospecific within EGF domains. In terms of processing, can be either O-glucosylated or O-xylosylated at Ser-93 by POGLUT1. In terms of tissue distribution, plasma and liver.

The protein resides in the secreted. The catalysed reaction is Selective cleavage of Arg-|-Ile bond in factor X to form factor Xa.. In terms of biological role, initiates the extrinsic pathway of blood coagulation. Serine protease that circulates in the blood in a zymogen form. Factor VII is converted to factor VIIa by factor Xa, factor XIIa, factor IXa, or thrombin by minor proteolysis. In the presence of tissue factor and calcium ions, factor VIIa then converts factor X to factor Xa by limited proteolysis. Factor VIIa also converts factor IX to factor IXa in the presence of tissue factor and calcium. The sequence is that of Coagulation factor VII (F7) from Mus musculus (Mouse).